The sequence spans 273 residues: MASHKEIVSSFVEGAPPGELADVVADIKALTSSTPNLLNELGPAFQKYNEEQFTTVKLPGGSQPVIISSHSSLEDGRYYDVESSSSFAYDHITQKASDVQSHVLEGEQTDLVKSTVKGLSAYVKEHFPNAAYGAYPIENDTKVAVVIVANKYSPNNFWNGRWRSLYIYDPSNNSIEGSIKVDVHYYEDGNVRLLTNKTVTATVSSGTGSGIAKEISVNEKKYQEELNKSFTSLSEGAFKGLRRQLPVTRQKIEWDKVASYRLGQDIGGGSSRR.

The protein belongs to the F-actin-capping protein alpha subunit family. Component of the F-actin capping complex, composed of a heterodimer of an alpha and a beta subunit.

The protein resides in the cytoplasm. It localises to the cytoskeleton. It is found in the actin patch. In terms of biological role, F-actin-capping proteins bind in a Ca(2+)-independent manner to the fast growing ends of actin filaments (barbed end) thereby blocking the exchange of subunits at these ends. Unlike other capping proteins (such as gelsolin and severin), these proteins do not sever actin filaments. This Neurospora crassa (strain ATCC 24698 / 74-OR23-1A / CBS 708.71 / DSM 1257 / FGSC 987) protein is F-actin-capping protein subunit alpha (fac-1).